The sequence spans 535 residues: CTP synthase (535 aa).

The tract at residues 1–267 (MTKYIFVTGG…DQIVCDHLKL (267 aa)) is amidoligase domain. A CTP-binding site is contributed by Ser-13. Residue Ser-13 coordinates UTP. An ATP-binding site is contributed by 14 to 19 (SLGKGI). Tyr-54 provides a ligand contact to L-glutamine. Asp-71 is an ATP binding site. 2 residues coordinate Mg(2+): Asp-71 and Glu-141. CTP contacts are provided by residues 148–150 (DIE), 188–193 (KTKPTQ), and Lys-224. Residues 188 to 193 (KTKPTQ) and Lys-224 contribute to the UTP site. 240–242 (RDA) serves as a coordination point for ATP. Residues 292–534 (KIALVGKYVE…VKASLTNKES (243 aa)) enclose the Glutamine amidotransferase type-1 domain. Gly-354 lines the L-glutamine pocket. The active-site Nucleophile; for glutamine hydrolysis is the Cys-381. L-glutamine contacts are provided by residues 382–385 (LGMQ), Glu-405, and Arg-462. Active-site residues include His-507 and Glu-509.

This sequence belongs to the CTP synthase family. In terms of assembly, homotetramer.

It carries out the reaction UTP + L-glutamine + ATP + H2O = CTP + L-glutamate + ADP + phosphate + 2 H(+). The catalysed reaction is L-glutamine + H2O = L-glutamate + NH4(+). The enzyme catalyses UTP + NH4(+) + ATP = CTP + ADP + phosphate + 2 H(+). The protein operates within pyrimidine metabolism; CTP biosynthesis via de novo pathway; CTP from UDP: step 2/2. Allosterically activated by GTP, when glutamine is the substrate; GTP has no effect on the reaction when ammonia is the substrate. The allosteric effector GTP functions by stabilizing the protein conformation that binds the tetrahedral intermediate(s) formed during glutamine hydrolysis. Inhibited by the product CTP, via allosteric rather than competitive inhibition. Catalyzes the ATP-dependent amination of UTP to CTP with either L-glutamine or ammonia as the source of nitrogen. Regulates intracellular CTP levels through interactions with the four ribonucleotide triphosphates. This chain is CTP synthase, found in Bacillus anthracis (strain A0248).